Here is a 290-residue protein sequence, read N- to C-terminus: MVVLHVKRGDESQFLLQAPGSTELEELTAQVTRVYNGRLKVHRLCTEIEELAEHGVFLPPNMQGLTDEQIEELKLKDEWGEKCVPSGGSVFTKDDIGRRNGHAPNEKMKQVLKKTVEEAKAMVSKKQVEAGVFVTMEMVKDALDQLRGAVMIVYPMGLPPYDPIRMEFENKEDLSGTQAALEVIQESEAQLWWAAKELRRTKKLSDYVGKNEKTKIIVKIQQRGQGAPAREPLISSEEHKQLMLFYHRRQEELKKLEENDDDSCLNSPWADNTALKRHFHGVKDIKWRPR.

The protein belongs to the CFAP298 family. As to quaternary structure, interacts with ZMYND10. Expressed in the trachea (at protein level).

It localises to the cytoplasm. Its subcellular location is the cytoskeleton. The protein localises to the cilium basal body. Functionally, plays a role in motile cilium function, possibly by acting on outer dynein arm assembly. Seems to be important for initiation rather than maintenance of cilium motility. Required for correct positioning of cilia at the apical cell surface, suggesting an additional role in the planar cell polarity (PCP) pathway. May suppress canonical Wnt signaling activity. This Rattus norvegicus (Rat) protein is Cilia- and flagella-associated protein 298.